A 454-amino-acid chain; its full sequence is Guanine deaminase (454 aa).

2 residues coordinate Zn(2+): His82 and His84. Residues 84 to 87 (HAPQ), 213 to 214 (RF), 240 to 243 (HISE), and Asp330 each bind substrate. Residues His240 and Asp330 each contribute to the Zn(2+) site. Ser453 is modified (phosphoserine).

The protein belongs to the metallo-dependent hydrolases superfamily. ATZ/TRZ family. As to quaternary structure, homodimer. Requires Zn(2+) as cofactor.

It carries out the reaction guanine + H2O + H(+) = xanthine + NH4(+). It functions in the pathway purine metabolism; guanine degradation; xanthine from guanine: step 1/1. Its function is as follows. Catalyzes the hydrolytic deamination of guanine, producing xanthine and ammonia. The chain is Guanine deaminase from Mus musculus (Mouse).